A 298-amino-acid chain; its full sequence is Bifunctional protein FolD (298 aa).

NADP(+)-binding positions include 165-167, S190, and I231; that span reads GRS.

This sequence belongs to the tetrahydrofolate dehydrogenase/cyclohydrolase family. As to quaternary structure, homodimer.

It catalyses the reaction (6R)-5,10-methylene-5,6,7,8-tetrahydrofolate + NADP(+) = (6R)-5,10-methenyltetrahydrofolate + NADPH. It carries out the reaction (6R)-5,10-methenyltetrahydrofolate + H2O = (6R)-10-formyltetrahydrofolate + H(+). It participates in one-carbon metabolism; tetrahydrofolate interconversion. Functionally, catalyzes the oxidation of 5,10-methylenetetrahydrofolate to 5,10-methenyltetrahydrofolate and then the hydrolysis of 5,10-methenyltetrahydrofolate to 10-formyltetrahydrofolate. In Prochlorococcus marinus (strain MIT 9312), this protein is Bifunctional protein FolD.